The sequence spans 365 residues: Methylthioribose-1-phosphate isomerase (365 aa).

The active-site Proton donor is Asp-249.

This sequence belongs to the eIF-2B alpha/beta/delta subunits family. MtnA subfamily.

The protein localises to the cytoplasm. The protein resides in the nucleus. It catalyses the reaction 5-(methylsulfanyl)-alpha-D-ribose 1-phosphate = 5-(methylsulfanyl)-D-ribulose 1-phosphate. The protein operates within amino-acid biosynthesis; L-methionine biosynthesis via salvage pathway; L-methionine from S-methyl-5-thio-alpha-D-ribose 1-phosphate: step 1/6. Catalyzes the interconversion of methylthioribose-1-phosphate (MTR-1-P) into methylthioribulose-1-phosphate (MTRu-1-P). This chain is Methylthioribose-1-phosphate isomerase, found in Ostreococcus lucimarinus (strain CCE9901).